We begin with the raw amino-acid sequence, 1215 residues long: Zinc finger E-box-binding homeobox 2 (1215 aa).

A disordered region spans residues 1-111 (MKQPIMADGP…ILQASVAGPE (111 aa)). Positions 12 to 24 (CKRRKQANPRRKN) are enriched in basic residues. Positions 57–74 (DQDTSPASMPNHESSPHM) are enriched in polar residues. Basic and acidic residues predominate over residues 89–98 (RESVVEHSWH). A Phosphoserine modification is found at Ser-142. C2H2-type zinc fingers lie at residues 211-234 (LTCPYCDRGYKRLTSLKEHIKYRH), 241-263 (FSCPLCSYTFAYRTQLERHMVTH), and 282-304 (FKCTECGKAFKYKHHLKEHLRIH). Residues 310-334 (YECPNCKKRFSHSGSYSSHISSKKC) form a C2H2-type 4; atypical zinc finger. Ser-356, Ser-360, and Ser-364 each carry phosphoserine. N6-acetyllysine is present on Lys-377. Residue Lys-391 forms a Glycyl lysine isopeptide (Lys-Gly) (interchain with G-Cter in SUMO); alternate linkage. Residue Lys-391 forms a Glycyl lysine isopeptide (Lys-Gly) (interchain with G-Cter in SUMO2); alternate linkage. The segment at 437-487 (QHLGVGMEAPLLGFPTMNSNLSEVQKVLQIVDNTVSRQKMDCKTEDISKLK) is SMAD-MH2 binding domain. Residues Lys-479 and Lys-555 each participate in a glycyl lysine isopeptide (Lys-Gly) (interchain with G-Cter in SUMO2) cross-link. Residues 581–605 (FSCQFCKESFPGPIPLHQHERYLCK) form a C2H2-type 5; degenerate zinc finger. Residues Lys-611 and Lys-632 each participate in a glycyl lysine isopeptide (Lys-Gly) (interchain with G-Cter in SUMO2) cross-link. A DNA-binding region (homeobox; atypical) is located at residues 644–703 (GLTSPINPYKDHMSVLKAYYAMNMEPNSDELLKISIAVGLPQEFVKEWFEQRKVYQYSNS). Position 647 is a phosphoserine (Ser-647). Disordered regions lie at residues 702–740 (NSRSPSLERTSKPLAPNSNPTTKDSLLPRSPVKPMDSIT) and 772–811 (VDKLDHSRSNTPSPLNLSSTSSKNSHSSSYTPNSFSSEEL). Residue Lys-713 forms a Glycyl lysine isopeptide (Lys-Gly) (interchain with G-Cter in SUMO2) linkage. A phosphoserine mark is found at Ser-731 and Ser-780. Positions 780–808 (SNTPSPLNLSSTSSKNSHSSSYTPNSFSS) are enriched in low complexity. Thr-782 is subject to Phosphothreonine. Ser-784 is modified (phosphoserine). Lys-866 participates in a covalent cross-link: Glycyl lysine isopeptide (Lys-Gly) (interchain with G-Cter in SUMO); alternate. Lys-866 is covalently cross-linked (Glycyl lysine isopeptide (Lys-Gly) (interchain with G-Cter in SUMO2); alternate). C2H2-type zinc fingers lie at residues 999–1021 (YACDLCDKTFQKSSSLLRHKYEH) and 1027–1049 (HQCQICKKAFKHKHHLIEHSRLH). Residues 1055–1076 (YQCDKCGKRFSHSGSYSQHMNH) form a C2H2-type 8; atypical zinc finger. A disordered region spans residues 1117–1215 (TPQGYSDSEE…EEDNMEDGME (99 aa)). Phosphoserine occurs at positions 1122 and 1124. The segment covering 1127–1149 (RESMPRDGESEKEHEKEGEEGYG) has biased composition (basic and acidic residues). Residues 1157 to 1167 (DEEEEEEEEES) are compositionally biased toward acidic residues. Composition is skewed to basic and acidic residues over residues 1168–1179 (ENKSMDTDPETI) and 1186–1205 (GDHSMDDSSEDGKMETKSDH). Ser-1203 bears the Phosphoserine mark. Over residues 1206–1215 (EEDNMEDGME) the composition is skewed to acidic residues.

This sequence belongs to the delta-EF1/ZFH-1 C2H2-type zinc-finger family. Interacts with CBX4 and CTBP1. Binds activated SMAD1, activated SMAD2 and activated SMAD3; binding with SMAD4 is not detected. Post-translationally, sumoylation on Lys-391 and Lys-866 is promoted by the E3 SUMO-protein ligase CBX4, and impairs interaction with CTBP1 and transcription repression activity.

Its subcellular location is the nucleus. The protein localises to the chromosome. Transcriptional inhibitor that binds to DNA sequence 5'-CACCT-3' in different promoters. Represses transcription of E-cadherin. Represses expression of MEOX2. This Mus musculus (Mouse) protein is Zinc finger E-box-binding homeobox 2 (Zeb2).